The chain runs to 439 residues: Ribosomal protein uS12 methylthiotransferase RimO (439 aa).

The region spanning 5–115 (PRISFTSLGC…VLDAVHRALP (111 aa)) is the MTTase N-terminal domain. Residues Cys-14, Cys-50, Cys-79, Cys-146, Cys-150, and Cys-153 each coordinate [4Fe-4S] cluster. One can recognise a Radical SAM core domain in the interval 132-369 (LTPRHYAYLK…MARQQKISAR (238 aa)). The TRAM domain maps to 372–438 (KRKVGTRQQI…QYDLHGSVAG (67 aa)).

Belongs to the methylthiotransferase family. RimO subfamily. Requires [4Fe-4S] cluster as cofactor.

The protein resides in the cytoplasm. The enzyme catalyses L-aspartate(89)-[ribosomal protein uS12]-hydrogen + (sulfur carrier)-SH + AH2 + 2 S-adenosyl-L-methionine = 3-methylsulfanyl-L-aspartate(89)-[ribosomal protein uS12]-hydrogen + (sulfur carrier)-H + 5'-deoxyadenosine + L-methionine + A + S-adenosyl-L-homocysteine + 2 H(+). Its function is as follows. Catalyzes the methylthiolation of an aspartic acid residue of ribosomal protein uS12. This is Ribosomal protein uS12 methylthiotransferase RimO from Bradyrhizobium diazoefficiens (strain JCM 10833 / BCRC 13528 / IAM 13628 / NBRC 14792 / USDA 110).